A 306-amino-acid polypeptide reads, in one-letter code: Homoserine kinase (306 aa).

An ATP-binding site is contributed by 90-100; the sequence is PLARGLGSSAS.

It belongs to the GHMP kinase family. Homoserine kinase subfamily.

Its subcellular location is the cytoplasm. The enzyme catalyses L-homoserine + ATP = O-phospho-L-homoserine + ADP + H(+). Its pathway is amino-acid biosynthesis; L-threonine biosynthesis; L-threonine from L-aspartate: step 4/5. Its function is as follows. Catalyzes the ATP-dependent phosphorylation of L-homoserine to L-homoserine phosphate. In Staphylococcus epidermidis (strain ATCC 35984 / DSM 28319 / BCRC 17069 / CCUG 31568 / BM 3577 / RP62A), this protein is Homoserine kinase.